The primary structure comprises 444 residues: NADH-quinone oxidoreductase subunit F (444 aa).

Residue 61–70 (GRGGAGFSTG) coordinates NAD(+). 176 to 223 (GAGRYICGEETALINSLEGRRANPRSKPPFPAVFGLWGKPTCVNNVET) serves as a coordination point for FMN. Residues cysteine 353, cysteine 356, cysteine 359, and cysteine 400 each coordinate [4Fe-4S] cluster.

The protein belongs to the complex I 51 kDa subunit family. In terms of assembly, composed of 13 different subunits. Subunits NuoCD, E, F, and G constitute the peripheral sector of the complex. It depends on FMN as a cofactor. [4Fe-4S] cluster is required as a cofactor.

It catalyses the reaction a quinone + NADH + 5 H(+)(in) = a quinol + NAD(+) + 4 H(+)(out). Functionally, NDH-1 shuttles electrons from NADH, via FMN and iron-sulfur (Fe-S) centers, to quinones in the respiratory chain. Couples the redox reaction to proton translocation (for every two electrons transferred, four hydrogen ions are translocated across the cytoplasmic membrane), and thus conserves the redox energy in a proton gradient. The protein is NADH-quinone oxidoreductase subunit F (nuoF) of Buchnera aphidicola subsp. Acyrthosiphon pisum (strain APS) (Acyrthosiphon pisum symbiotic bacterium).